Consider the following 340-residue polypeptide: Cobalt-precorrin-5B C(1)-methyltransferase (340 aa).

The protein belongs to the CbiD family.

It carries out the reaction Co-precorrin-5B + S-adenosyl-L-methionine = Co-precorrin-6A + S-adenosyl-L-homocysteine. Its pathway is cofactor biosynthesis; adenosylcobalamin biosynthesis; cob(II)yrinate a,c-diamide from sirohydrochlorin (anaerobic route): step 6/10. Catalyzes the methylation of C-1 in cobalt-precorrin-5B to form cobalt-precorrin-6A. The sequence is that of Cobalt-precorrin-5B C(1)-methyltransferase from Methanococcoides burtonii (strain DSM 6242 / NBRC 107633 / OCM 468 / ACE-M).